The primary structure comprises 316 residues: 4-hydroxy-3-methylbut-2-enyl diphosphate reductase (316 aa).

Residue C12 participates in [4Fe-4S] cluster binding. 2 residues coordinate (2E)-4-hydroxy-3-methylbut-2-enyl diphosphate: H41 and H74. 2 residues coordinate dimethylallyl diphosphate: H41 and H74. 2 residues coordinate isopentenyl diphosphate: H41 and H74. Residue C96 coordinates [4Fe-4S] cluster. (2E)-4-hydroxy-3-methylbut-2-enyl diphosphate is bound at residue H124. Residue H124 participates in dimethylallyl diphosphate binding. H124 serves as a coordination point for isopentenyl diphosphate. E126 acts as the Proton donor in catalysis. A (2E)-4-hydroxy-3-methylbut-2-enyl diphosphate-binding site is contributed by T167. [4Fe-4S] cluster is bound at residue C197. The (2E)-4-hydroxy-3-methylbut-2-enyl diphosphate site is built by S225, S226, N227, and S269. Positions 225, 226, 227, and 269 each coordinate dimethylallyl diphosphate. 4 residues coordinate isopentenyl diphosphate: S225, S226, N227, and S269.

This sequence belongs to the IspH family. In terms of assembly, homodimer. [4Fe-4S] cluster serves as cofactor.

The catalysed reaction is isopentenyl diphosphate + 2 oxidized [2Fe-2S]-[ferredoxin] + H2O = (2E)-4-hydroxy-3-methylbut-2-enyl diphosphate + 2 reduced [2Fe-2S]-[ferredoxin] + 2 H(+). The enzyme catalyses dimethylallyl diphosphate + 2 oxidized [2Fe-2S]-[ferredoxin] + H2O = (2E)-4-hydroxy-3-methylbut-2-enyl diphosphate + 2 reduced [2Fe-2S]-[ferredoxin] + 2 H(+). Its pathway is isoprenoid biosynthesis; dimethylallyl diphosphate biosynthesis; dimethylallyl diphosphate from (2E)-4-hydroxy-3-methylbutenyl diphosphate: step 1/1. It participates in isoprenoid biosynthesis; isopentenyl diphosphate biosynthesis via DXP pathway; isopentenyl diphosphate from 1-deoxy-D-xylulose 5-phosphate: step 6/6. Its function is as follows. Catalyzes the conversion of 1-hydroxy-2-methyl-2-(E)-butenyl 4-diphosphate (HMBPP) into a mixture of isopentenyl diphosphate (IPP) and dimethylallyl diphosphate (DMAPP). Acts in the terminal step of the DOXP/MEP pathway for isoprenoid precursor biosynthesis. In Enterobacter sp. (strain 638), this protein is 4-hydroxy-3-methylbut-2-enyl diphosphate reductase.